The primary structure comprises 362 residues: Phosphoserine aminotransferase (362 aa).

Residues S9 and R42 each contribute to the L-glutamate site. Pyridoxal 5'-phosphate contacts are provided by residues G76–R77, W102, T153, D174, and Q197. At K198 the chain carries N6-(pyridoxal phosphate)lysine. N239 to T240 provides a ligand contact to pyridoxal 5'-phosphate.

It belongs to the class-V pyridoxal-phosphate-dependent aminotransferase family. SerC subfamily. Homodimer. The cofactor is pyridoxal 5'-phosphate.

Its subcellular location is the cytoplasm. The enzyme catalyses O-phospho-L-serine + 2-oxoglutarate = 3-phosphooxypyruvate + L-glutamate. The catalysed reaction is 4-(phosphooxy)-L-threonine + 2-oxoglutarate = (R)-3-hydroxy-2-oxo-4-phosphooxybutanoate + L-glutamate. It participates in amino-acid biosynthesis; L-serine biosynthesis; L-serine from 3-phospho-D-glycerate: step 2/3. Its pathway is cofactor biosynthesis; pyridoxine 5'-phosphate biosynthesis; pyridoxine 5'-phosphate from D-erythrose 4-phosphate: step 3/5. In terms of biological role, catalyzes the reversible conversion of 3-phosphohydroxypyruvate to phosphoserine and of 3-hydroxy-2-oxo-4-phosphonooxybutanoate to phosphohydroxythreonine. Is involved in both pyridoxine and serine biosynthesis. The protein is Phosphoserine aminotransferase (serC) of Escherichia coli (strain K12).